Here is a 229-residue protein sequence, read N- to C-terminus: MAKKSKQLRAALEKIDSTKAYSVEEAVALAKETNFAKFDATVEVAYNLNIDVKKADQQIRGAMVLPHGTGKTARVLVFARGAKAEEAKAAGADFVGEDDLVAKINDGWLDFDVVIATPDMMALVGRLGRVLGPRNLMPNPKTGTVTMDVAKAVEESKGGKITYRADRAGIVQAIIGKVSFDADKLAENFKAFNEVIQKAKPATAKGTYVTSLTITTTQGPGIKVDVNSL.

This sequence belongs to the universal ribosomal protein uL1 family. As to quaternary structure, part of the 50S ribosomal subunit.

Functionally, binds directly to 23S rRNA. The L1 stalk is quite mobile in the ribosome, and is involved in E site tRNA release. In terms of biological role, protein L1 is also a translational repressor protein, it controls the translation of the L11 operon by binding to its mRNA. The sequence is that of Large ribosomal subunit protein uL1 from Streptococcus gordonii (strain Challis / ATCC 35105 / BCRC 15272 / CH1 / DL1 / V288).